The chain runs to 129 residues: Small ribosomal subunit protein uS11c (129 aa).

Belongs to the universal ribosomal protein uS11 family. In terms of assembly, part of the 30S ribosomal subunit.

It localises to the plastid. The protein localises to the chloroplast. This Oltmannsiellopsis viridis (Marine flagellate) protein is Small ribosomal subunit protein uS11c.